Consider the following 301-residue polypeptide: Probable 2-oxoglutarate-dependent dioxygenase AOP1 (301 aa).

In terms of domain architecture, Fe2OG dioxygenase spans 158-262 (TYYLTRLMKY…RYSTGLFSIP (105 aa)). Residues His186, Asp188, and His243 each contribute to the Fe cation site. Arg253 lines the 2-oxoglutarate pocket.

It belongs to the iron/ascorbate-dependent oxidoreductase family. Requires Fe(2+) as cofactor.

In terms of biological role, probable 2-oxoglutarate-dependent dioxygenase that may be involved in glucosinolates biosynthesis. May play a role in the production of aliphatic glucosinolates. In Arabidopsis thaliana (Mouse-ear cress), this protein is Probable 2-oxoglutarate-dependent dioxygenase AOP1 (AOP1).